Consider the following 238-residue polypeptide: Ribonuclease PH (238 aa).

Phosphate contacts are provided by residues arginine 86 and 124-126 (GTR).

The protein belongs to the RNase PH family. In terms of assembly, homohexameric ring arranged as a trimer of dimers.

It catalyses the reaction tRNA(n+1) + phosphate = tRNA(n) + a ribonucleoside 5'-diphosphate. In terms of biological role, phosphorolytic 3'-5' exoribonuclease that plays an important role in tRNA 3'-end maturation. Removes nucleotide residues following the 3'-CCA terminus of tRNAs; can also add nucleotides to the ends of RNA molecules by using nucleoside diphosphates as substrates, but this may not be physiologically important. Probably plays a role in initiation of 16S rRNA degradation (leading to ribosome degradation) during starvation. The sequence is that of Ribonuclease PH from Acinetobacter baumannii (strain AB307-0294).